The chain runs to 454 residues: DNA primase small subunit (454 aa).

Residues Glu66, Asp131, and Asp133 contribute to the active site. Residues Asp131 and Asp133 each contribute to the Mg(2+) site. Positions 131 and 133 each coordinate Mn(2+). Position 131–133 (Asp131–Asp133) interacts with a ribonucleoside 5'-triphosphate. Residues Cys143, Cys144, Cys150, and Cys153 each contribute to the Zn(2+) site. Residues Cys143–Cys153 carry the Zinc knuckle motif motif. Ser182–His188 lines the a ribonucleoside 5'-triphosphate pocket. Residue Asp333 coordinates Mg(2+). Asp333 provides a ligand contact to Mn(2+). His342–Lys345 lines the a ribonucleoside 5'-triphosphate pocket. The tract at residues Asp385–Phe420 is disordered. Composition is skewed to polar residues over residues Gln389 to Glu404 and Arg411 to Phe420.

It belongs to the eukaryotic-type primase small subunit family. Heterodimer of a catalytic subunit spp1/pri1 and a regulatory subunit spp2/pri2, also known as the DNA primase complex. Component of the alpha DNA polymerase complex (also known as the alpha DNA polymerase-primase complex) consisting of four subunits: the catalytic subunit pol1, the accessory subunit spb70/pol12, and the primase complex subunits spp1/pri1 and spp2/pri2 respectively. Mg(2+) serves as cofactor. Mn(2+) is required as a cofactor.

It is found in the nucleus. The catalysed reaction is ssDNA + n NTP = ssDNA/pppN(pN)n-1 hybrid + (n-1) diphosphate.. Catalytic subunit of the DNA primase complex and component of the DNA polymerase alpha complex (also known as the alpha DNA polymerase-primase complex - primosome/replisome) which play an essential role in the initiation of DNA synthesis. During the S phase of the cell cycle, the DNA polymerase alpha complex (composed of a catalytic subunit pol1, an accessory subunit spb70/pol12 and two primase subunits, the catalytic subunit spp1/pri1 and the regulatory subunit spp2/pri2) is recruited to DNA at the replicative forks. The primase subunit of the polymerase alpha complex initiates DNA synthesis by oligomerising short RNA primers on both leading and lagging strands. In Schizosaccharomyces pombe (strain 972 / ATCC 24843) (Fission yeast), this protein is DNA primase small subunit.